The sequence spans 244 residues: Nuclear protein UL4 homolog (244 aa).

The disordered stretch occupies residues 193–227 (RPDDQTTPTPTPHQYTSQRRQPETNCPSSPQPAFF). Over residues 205–220 (HQYTSQRRQPETNCPS) the composition is skewed to polar residues.

Belongs to the alphaherpesvirinae HHV-1 UL4 family.

The protein localises to the host nucleus. The chain is Nuclear protein UL4 homolog from Varicella-zoster virus (strain Dumas) (HHV-3).